The chain runs to 170 residues: MSTEGAKPSEMLIAACRSNNVDMLEEVVHQQEGDGVSFINNARDSLGNDCVHVCTKYGSLECLDWLLDISGVNLNNRCRMTGDTPLHFAVMFIKKDQETALRMVEMLMEVGADPLLTNNDGFRPIDLVPGDFHDVFASALEGPAPALQYSADVVADDDDEEEGSGESDEE.

ANK repeat units lie at residues 46-76 (LGND…NLNN) and 81-116 (TGDT…DPLL). Positions 150–170 (SADVVADDDDEEEGSGESDEE) are disordered. Over residues 154-170 (VADDDDEEEGSGESDEE) the composition is skewed to acidic residues.

The protein localises to the cytoplasm. Its subcellular location is the nucleus. The protein is Ankyrin repeat-containing protein C105.02c of Schizosaccharomyces pombe (strain 972 / ATCC 24843) (Fission yeast).